We begin with the raw amino-acid sequence, 167 residues long: Small heat shock protein C1 (167 aa).

The region spanning 59 to 167 (PFYESNSIKS…EQDAKEIPIN (109 aa)) is the sHSP domain.

It belongs to the small heat shock protein (HSP20) family.

This chain is Small heat shock protein C1 (hspC1), found in Rickettsia bellii (strain RML369-C).